Here is a 303-residue protein sequence, read N- to C-terminus: Probable 5-dehydro-4-deoxyglucarate dehydratase (303 aa).

Belongs to the DapA family.

It catalyses the reaction 5-dehydro-4-deoxy-D-glucarate + H(+) = 2,5-dioxopentanoate + CO2 + H2O. It functions in the pathway carbohydrate acid metabolism; D-glucarate degradation; 2,5-dioxopentanoate from D-glucarate: step 2/2. This chain is Probable 5-dehydro-4-deoxyglucarate dehydratase, found in Pseudomonas putida (strain ATCC 700007 / DSM 6899 / JCM 31910 / BCRC 17059 / LMG 24140 / F1).